A 1405-amino-acid chain; its full sequence is DNA-directed RNA polymerase subunit beta' (1405 aa).

The Zn(2+) site is built by cysteine 70, cysteine 72, cysteine 85, and cysteine 88. Aspartate 460, aspartate 462, and aspartate 464 together coordinate Mg(2+). The Zn(2+) site is built by cysteine 814, cysteine 888, cysteine 895, and cysteine 898.

It belongs to the RNA polymerase beta' chain family. As to quaternary structure, the RNAP catalytic core consists of 2 alpha, 1 beta, 1 beta' and 1 omega subunit. When a sigma factor is associated with the core the holoenzyme is formed, which can initiate transcription. Mg(2+) is required as a cofactor. Zn(2+) serves as cofactor.

The catalysed reaction is RNA(n) + a ribonucleoside 5'-triphosphate = RNA(n+1) + diphosphate. In terms of biological role, DNA-dependent RNA polymerase catalyzes the transcription of DNA into RNA using the four ribonucleoside triphosphates as substrates. The protein is DNA-directed RNA polymerase subunit beta' of Wigglesworthia glossinidia brevipalpis.